The primary structure comprises 615 residues: Delta(14)-sterol reductase LBR (615 aa).

Positions 1–62 (MPSRKFADGE…DIKPLTSFRQ (62 aa)) constitute a Tudor domain. Residues 1–211 (MPSRKFADGE…IRAKDLEFGG (211 aa)) are Nuclear-facing. Residues 53-109 (DIKPLTSFRQRKGGSTSSSPSRRRGSRSRSRSRSPGRPPKSARRSASASHQADIKEA) form a disordered region. At K55 the chain carries N6-acetyllysine. T58 carries the post-translational modification Phosphothreonine. S59 and S67 each carry phosphoserine. 2 positions are modified to phosphoserine; by CDK1: S71 and S86. Positions 73 to 86 (SRRRGSRSRSRSRS) are enriched in basic residues. Phosphoserine occurs at positions 97 and 99. At T118 the chain carries Phosphothreonine. S128 carries the post-translational modification Phosphoserine. At T200 the chain carries Phosphothreonine. Transmembrane regions (helical) follow at residues 212 to 232 (VPGVFLIMFGLPVFLFLLLLM), 258 to 278 (VFGVYLLWFLIQVVFYLLPIG), 299 to 319 (FYAFILTSAVIGTSLFQGVEF), 326 to 346 (FLQFALAATVFCVVLSVYLYM), 415 to 435 (VPSLAMILVNSFQLLYVVDAL), 447 to 467 (IIHDGFGFMLAFGDLVWVPFI), 481 to 501 (EVSWPMASLIIVLKFCGYVIF), and 561 to 581 (ACGFNHILPYFYIIYFTMLLV). N6-acetyllysine is present on residues K594 and K601.

It belongs to the ERG4/ERG24 family. As to quaternary structure, interacts with CBX5. Interacts with DNA. Interaction with DNA is sequence independent with higher affinity for supercoiled and relaxed circular DNA than linear DNA. Interacts with lamin B. Interacts with CLNK. Interacts with TMEM147; promoting LBR localization to the nucleus inner membrane. Phosphorylated by CDK1 in mitosis when the inner nuclear membrane breaks down into vesicles that dissociate from the lamina and the chromatin. It is phosphorylated by different protein kinases in interphase when the membrane is associated with these structures. Phosphorylation of LBR and HP1 proteins may be responsible for some of the alterations in chromatin organization and nuclear structure which occur at various times during the cell cycle. Phosphorylated by SRPK1. In late anaphase LBR is dephosphorylated, probably by PP1 and/or PP2A, allowing reassociation with chromatin.

It is found in the nucleus inner membrane. It localises to the nucleus. The protein resides in the cytoplasm. The protein localises to the endoplasmic reticulum membrane. The catalysed reaction is 5alpha-cholest-8,14-dien-3beta-ol + NADPH + H(+) = 5alpha-cholest-8-en-3beta-ol + NADP(+). It carries out the reaction 4,4-dimethyl-5alpha-cholesta-8,24-dien-3beta-ol + NADP(+) = 4,4-dimethyl-5alpha-cholesta-8,14,24-trien-3beta-ol + NADPH + H(+). It catalyses the reaction 4,4-dimethyl-8,14-cholestadien-3beta-ol + NADPH + H(+) = 4,4-dimethyl-5alpha-cholest-8-en-3beta-ol + NADP(+). The protein operates within steroid biosynthesis; cholesterol biosynthesis. Its function is as follows. Catalyzes the reduction of the C14-unsaturated bond of lanosterol, as part of the metabolic pathway leading to cholesterol biosynthesis. Plays a critical role in myeloid cell cholesterol biosynthesis which is essential to both myeloid cell growth and functional maturation. Mediates the activation of NADPH oxidases, perhaps by maintaining critical levels of cholesterol required for membrane lipid raft formation during neutrophil differentiation. Anchors the lamina and the heterochromatin to the inner nuclear membrane. The protein is Delta(14)-sterol reductase LBR (LBR) of Pongo abelii (Sumatran orangutan).